Consider the following 442-residue polypeptide: F-box only protein 39 (442 aa).

The region spanning 16–61 (WAFLPDLCLCRVFWWLGDRDRSRAALVCRKWNQMMYSAELWRYRTI) is the F-box domain.

As to quaternary structure, directly interacts with SKP1 and CUL1.

Functionally, substrate-recognition component of the SCF (SKP1-CUL1-F-box protein)-type E3 ubiquitin ligase complex. The chain is F-box only protein 39 (FBXO39) from Homo sapiens (Human).